The chain runs to 123 residues: Small ribosomal subunit protein uS12c (123 aa).

The protein belongs to the universal ribosomal protein uS12 family. Part of the 30S ribosomal subunit.

The protein localises to the plastid. Its subcellular location is the chloroplast. In terms of biological role, with S4 and S5 plays an important role in translational accuracy. Located at the interface of the 30S and 50S subunits. This Chaetosphaeridium globosum (Charophycean green alga) protein is Small ribosomal subunit protein uS12c (rps12).